The sequence spans 238 residues: Lactate utilization protein A (238 aa).

The protein belongs to the LutA/YkgE family.

In terms of biological role, is involved in L-lactate degradation and allows cells to grow with lactate as the sole carbon source. In Bacillus pumilus (strain SAFR-032), this protein is Lactate utilization protein A.